Reading from the N-terminus, the 824-residue chain is Leucine--tRNA ligase (824 aa).

Residues 40-50 (PYPSGKIHMGH) carry the 'HIGH' region motif. The short motif at 580–584 (KMSKS) is the 'KMSKS' region element. An ATP-binding site is contributed by Lys-583.

This sequence belongs to the class-I aminoacyl-tRNA synthetase family.

It localises to the cytoplasm. The catalysed reaction is tRNA(Leu) + L-leucine + ATP = L-leucyl-tRNA(Leu) + AMP + diphosphate. The protein is Leucine--tRNA ligase of Alkaliphilus metalliredigens (strain QYMF).